Here is a 716-residue protein sequence, read N- to C-terminus: DNA ligase (716 aa).

Residues 42–46 (DAEYD), 91–92 (SL), and E125 contribute to the NAD(+) site. K127 acts as the N6-AMP-lysine intermediate in catalysis. NAD(+)-binding residues include R148, E184, K300, and K324. Zn(2+) is bound by residues C429, C432, C447, and C453. Positions 638–716 (TASSPIAGKI…EEAWLQLIEG (79 aa)) constitute a BRCT domain.

Belongs to the NAD-dependent DNA ligase family. LigA subfamily. The cofactor is Mg(2+). Mn(2+) serves as cofactor.

The enzyme catalyses NAD(+) + (deoxyribonucleotide)n-3'-hydroxyl + 5'-phospho-(deoxyribonucleotide)m = (deoxyribonucleotide)n+m + AMP + beta-nicotinamide D-nucleotide.. DNA ligase that catalyzes the formation of phosphodiester linkages between 5'-phosphoryl and 3'-hydroxyl groups in double-stranded DNA using NAD as a coenzyme and as the energy source for the reaction. It is essential for DNA replication and repair of damaged DNA. In Bartonella henselae (strain ATCC 49882 / DSM 28221 / CCUG 30454 / Houston 1) (Rochalimaea henselae), this protein is DNA ligase.